We begin with the raw amino-acid sequence, 1088 residues long: RNA-directed RNA polymerase (1088 aa).

The region spanning 501-687 (LSYGDVTRFL…AKRYIAGGKI (187 aa)) is the RdRp catalytic domain.

This sequence belongs to the reoviridae RNA-directed RNA polymerase family. Interacts with VP3 (Potential). Interacts with VP2; this interaction activates VP1. Interacts with NSP5; this interaction is probably necessary for the formation of functional virus factories. Interacts with NSP2; this interaction is weak. The cofactor is Mg(2+).

Its subcellular location is the virion. It carries out the reaction RNA(n) + a ribonucleoside 5'-triphosphate = RNA(n+1) + diphosphate. Functionally, RNA-directed RNA polymerase that is involved in both transcription and genome replication. Together with VP3 capping enzyme, forms an enzyme complex positioned near the channels situated at each of the five-fold vertices of the core. Following infection, the outermost layer of the virus is lost, leaving a double-layered particle (DLP) made up of the core and VP6 shell. VP1 then catalyzes the transcription of fully conservative plus-strand genomic RNAs that are extruded through the DLP's channels into the cytoplasm where they function as mRNAs for translation of viral proteins. One copy of each of the viral (+)RNAs is also recruited during core assembly, together with newly synthesized polymerase complexes and VP2. The polymerase of these novo-formed particles catalyzes the synthesis of complementary minus-strands leading to dsRNA formation. To do so, the polymerase specifically recognizes and binds 4 bases 5'-UGUG-3' in the conserved 3'-sequence of plus-strand RNA templates. VP2 presumably activates the autoinhibited VP1-RNA complex to coordinate packaging and genome replication. Once dsRNA synthesis is complete, the polymerase switches to the transcriptional mode, thus providing secondary transcription. This chain is RNA-directed RNA polymerase, found in Rotavirus A (strain RVA/Human/Philippines/L26/1987/G12P1B[4]) (RV-A).